The primary structure comprises 654 residues: DNA-directed RNA polymerase III subunit RPC3 (654 aa).

Position 27 is a phosphothreonine (T27). 2 disordered regions span residues 381–401 and 422–448; these read LSRK…ASLP and KSLQ…EDPH. Phosphoserine is present on residues S392 and S394. Residues 429-444 are compositionally biased toward acidic residues; sequence DTQEEDEEEEDLDADT. Positions 581–602 are leucine-zipper; that stretch reads LEWNMANLLFKKEKLKQENSTL.

Belongs to the RNA polymerase beta chain family. Component of the RNA polymerase III (Pol III) complex consisting of 17 subunits.

Its subcellular location is the cytoplasm. It localises to the nucleus. In terms of biological role, DNA-dependent RNA polymerase catalyzes the transcription of DNA into RNA using the four ribonucleoside triphosphates as substrates. Specific core component of RNA polymerase III which synthesizes small RNAs, such as 5S rRNA and tRNAs. This chain is DNA-directed RNA polymerase III subunit RPC3 (RPC82), found in Saccharomyces cerevisiae (strain YJM789) (Baker's yeast).